Consider the following 331-residue polypeptide: Olfactory receptor 6S1 (331 aa).

At methionine 1–leucine 29 the chain is on the extracellular side. Asparagine 6 carries N-linked (GlcNAc...) asparagine glycosylation. Residues phenylalanine 30–valine 50 form a helical membrane-spanning segment. The Cytoplasmic portion of the chain corresponds to valine 51–threonine 59. A helical membrane pass occupies residues proline 60–isoleucine 80. Over proline 81–cysteine 99 the chain is Extracellular. A disulfide bridge connects residues cysteine 99 and cysteine 182. The chain crosses the membrane as a helical span at residues isoleucine 100 to methionine 120. Residues serine 121–alanine 147 lie on the Cytoplasmic side of the membrane. A helical membrane pass occupies residues leucine 148–leucine 168. The Extracellular segment spans residues proline 169–serine 207. The helical transmembrane segment at leucine 208–valine 228 threads the bilayer. The Cytoplasmic segment spans residues leucine 229–serine 242. Residues threonine 243–valine 263 form a helical membrane-spanning segment. Residues arginine 264–asparagine 274 are Extracellular-facing. The chain crosses the membrane as a helical span at residues tryptophan 275–leucine 295. Over arginine 296–lysine 331 the chain is Cytoplasmic.

This sequence belongs to the G-protein coupled receptor 1 family.

The protein localises to the cell membrane. Functionally, odorant receptor. The sequence is that of Olfactory receptor 6S1 (OR6S1) from Homo sapiens (Human).